Here is a 724-residue protein sequence, read N- to C-terminus: Hyaluronan mediated motility receptor (724 aa).

Disordered stretches follow at residues 1-22 (MSFPKAPLKRFNDPSGCAPSPG) and 40-81 (KSQR…QKND). A Phosphoserine modification is found at Ser-20. 2 stretches are compositionally biased toward basic and acidic residues: residues 46-60 (QQKESKQNLNVDKDT) and 70-81 (KSSESKESQKND). Asn-133, Asn-477, Asn-567, and Asn-588 each carry an N-linked (GlcNAc...) asparagine glycan. The segment at 365 to 546 (EEMVKEKNLF…ITDLQNQLKQ (182 aa)) is required for interaction with FAM83D. Hyaluronic acid-binding stretches follow at residues 635 to 645 (KQKIKHVVKLK) and 657 to 666 (KLRCQLAKKK). Phosphothreonine is present on Thr-703.

In terms of assembly, interacts with ANKRD26. Interacts with DYNLL1. Interacts with FAM83D/CHICA. Expressed in testis. Expressed in the breast.

Its subcellular location is the cell surface. The protein localises to the cytoplasm. It is found in the cytoskeleton. The protein resides in the spindle. Receptor for hyaluronic acid (HA). Involved in cell motility. When hyaluronan binds to HMMR, the phosphorylation of a number of proteins, including PTK2/FAK1 occurs. May also be involved in cellular transformation and metastasis formation, and in regulating extracellular-regulated kinase (ERK) activity. May act as a regulator of adipogenisis. The polypeptide is Hyaluronan mediated motility receptor (HMMR) (Homo sapiens (Human)).